Here is a 332-residue protein sequence, read N- to C-terminus: Malate dehydrogenase 1, cytoplasmic (332 aa).

Residues 16–17 (QI) and Asp-43 each bind NAD(+). At Met-56 the chain carries Methionine sulfoxide. Gly-90 contributes to the NAD(+) binding site. Residue Met-97 is modified to Methionine sulfoxide. Oxaloacetate is bound at residue Arg-99. Gln-113 lines the NAD(+) pocket. Lys-119 is covalently cross-linked (Glycyl lysine isopeptide (Lys-Gly) (interchain with G-Cter in ubiquitin)). Asn-132 lines the NAD(+) pocket. Asn-132, Arg-163, His-188, and Ser-243 together coordinate oxaloacetate. The active-site Proton acceptor is the His-188.

This sequence belongs to the LDH/MDH superfamily. MDH type 2 family. Forms a homodimer. Forms a disulfide-linked homodimer upon oxidation. Interacts with 14-3-3-like proteins GRF1 GRF3 and GRF8. Interacts with TRX1, TRX2, TRX3, TRX4 and TRX5. Expressed in rosette leaves.

Its subcellular location is the cytoplasm. The enzyme catalyses (S)-malate + NAD(+) = oxaloacetate + NADH + H(+). Decreased activity upon treatment with hydrogen peroxide. Functionally, catalyzes a reversible NAD-dependent dehydrogenase reaction involved in central metabolism and redox homeostasis between organellar compartments. This chain is Malate dehydrogenase 1, cytoplasmic (MDH1), found in Arabidopsis thaliana (Mouse-ear cress).